We begin with the raw amino-acid sequence, 271 residues long: Putative phosphoenolpyruvate synthase regulatory protein (271 aa).

Gly151–Thr158 contributes to the ADP binding site.

This sequence belongs to the pyruvate, phosphate/water dikinase regulatory protein family. PSRP subfamily.

It catalyses the reaction [pyruvate, water dikinase] + ADP = [pyruvate, water dikinase]-phosphate + AMP + H(+). It carries out the reaction [pyruvate, water dikinase]-phosphate + phosphate + H(+) = [pyruvate, water dikinase] + diphosphate. Its function is as follows. Bifunctional serine/threonine kinase and phosphorylase involved in the regulation of the phosphoenolpyruvate synthase (PEPS) by catalyzing its phosphorylation/dephosphorylation. The sequence is that of Putative phosphoenolpyruvate synthase regulatory protein from Burkholderia cenocepacia (strain ATCC BAA-245 / DSM 16553 / LMG 16656 / NCTC 13227 / J2315 / CF5610) (Burkholderia cepacia (strain J2315)).